The primary structure comprises 630 residues: A disintegrin and metalloproteinase with thrombospondin motifs 4 (630 aa).

Residues 1 to 5 constitute a propeptide that is removed on maturation; that stretch reads RRTKR. The 211-residue stretch at 11 to 221 folds into the Peptidase M12B domain; sequence RFVETLVVAD…GYGHCLLDKP (211 aa). Intrachain disulfides connect cysteine 86–cysteine 138, cysteine 115–cysteine 120, cysteine 132–cysteine 216, cysteine 170–cysteine 200, cysteine 242–cysteine 265, cysteine 253–cysteine 275, cysteine 260–cysteine 294, cysteine 288–cysteine 299, cysteine 325–cysteine 362, cysteine 329–cysteine 367, and cysteine 340–cysteine 352. An N-linked (GlcNAc...) asparagine glycan is attached at asparagine 96. Position 154 (histidine 154) interacts with Zn(2+). Glutamate 155 is an active-site residue. 2 residues coordinate Zn(2+): histidine 158 and histidine 164. Positions 233–303 constitute a Disintegrin domain; sequence GKDYDADRQC…CMGGRCLHVD (71 aa). Residues 313–368 enclose the TSP type-1 domain; it reads AGGWGPWGPWGDCSRTCGGGVQFSSRDCTKPVPRNGGKYCEGRRTPFRSCNTKNCP. The N-linked (GlcNAc...) asparagine glycan is linked to asparagine 474. The spacer stretch occupies residues 479–630; the sequence is SKQSGSFKKF…LRKRTWAGRK (152 aa).

Interacts with SRPX2. Requires Zn(2+) as cofactor. In terms of processing, the precursor is cleaved by a furin endopeptidase. Post-translationally, glycosylated. Can be O-fucosylated by POFUT2 on a serine or a threonine residue found within the consensus sequence C1-X(2)-(S/T)-C2-G of the TSP type-1 repeat domains where C1 and C2 are the first and second cysteine residue of the repeat, respectively. Fucosylated repeats can then be further glycosylated by the addition of a beta-1,3-glucose residue by the glucosyltransferase, B3GALTL. Fucosylation mediates the efficient secretion of ADAMTS family members. Can also be C-glycosylated with one or two mannose molecules on tryptophan residues within the consensus sequence W-X-X-W of the TPRs, and N-glycosylated. These other glycosylations can also facilitate secretion. Brain specific.

Its subcellular location is the secreted. It localises to the extracellular space. It is found in the extracellular matrix. The enzyme catalyses Glutamyl endopeptidase. Bonds cleaved include 370-Thr-Glu-Gly-Glu-|-Ala-Arg-Gly-Ser-377 in the interglobular domain of mammalian aggrecan.. Functionally, cleaves aggrecan, a cartilage proteoglycan, at the '392-Glu-|-Ala-393' site and may be involved in its turnover. Also cleaves COMP. May play an important role in the destruction of aggrecan in arthritic diseases. The chain is A disintegrin and metalloproteinase with thrombospondin motifs 4 (Adamts4) from Rattus norvegicus (Rat).